The following is a 468-amino-acid chain: 6-phosphogluconate dehydrogenase, decarboxylating (468 aa).

NADP(+)-binding positions include 10-15 (GMAVMG), 33-35 (NRT), 74-76 (VQS), and asparagine 102. Substrate contacts are provided by residues asparagine 102 and 128–130 (SGG). The Proton acceptor role is filled by lysine 182. 185–186 (HN) lines the substrate pocket. The active-site Proton donor is the glutamate 189. 5 residues coordinate substrate: tyrosine 190, lysine 259, arginine 286, arginine 445, and histidine 451.

Belongs to the 6-phosphogluconate dehydrogenase family. In terms of assembly, homodimer.

It catalyses the reaction 6-phospho-D-gluconate + NADP(+) = D-ribulose 5-phosphate + CO2 + NADPH. It functions in the pathway carbohydrate degradation; pentose phosphate pathway; D-ribulose 5-phosphate from D-glucose 6-phosphate (oxidative stage): step 3/3. Functionally, catalyzes the oxidative decarboxylation of 6-phosphogluconate to ribulose 5-phosphate and CO(2), with concomitant reduction of NADP to NADPH. This Buchnera aphidicola subsp. Acyrthosiphon pisum (strain APS) (Acyrthosiphon pisum symbiotic bacterium) protein is 6-phosphogluconate dehydrogenase, decarboxylating (gnd).